The sequence spans 937 residues: MSQPIPSASPALAALIERAVARVRHALPADAPWPEGVEHPLARVALASDFVVDTLARQPALLAHLAQPDPPPLPVPRLDPAQPQEWAAQLRRYRAAASARLVWRDVLGLDDVDATLAGATTLAETCLQCALQALEQQFSTRHGQVIAEDGSVQRLVVFGLGKLGGGELNFSSDVDLVYAYPQAGQSDGARPLAAEEYFARLGQQLARLLDETTADGFSHRVDLRLRPFGSAGRVALSFNGMDQYFQREGRDWERYAWLKARAVAGDIAAGEAWLETLRPFVYRRYLDFTALDGLRDMKAAITAEVAHHARLDDIKRGPGGIREIEFLAQSLQLIRGGREASLRERRLLPALQALVDLGQIDPPTGQALADAYRFLRRVENRLQMLRDAQTHALPQGEPERERIALGLGYAHWQALLEALAPHRTRVAAEFAELLAPRVHATAPDTLADYWRALPEGDAAPLLGIGLHDPNNAHHMLADFAQSSGVRALSDGARTRLDRVMPALLHAAIRATQPDAALRRVLGLLQATLRRTSYLALLDEQPSALARLVDVLSRSALLAERLAAYPLLLDELLDTRISGPLPDRAALHTACVDTLQIDDTEAALRELNERRLALSFRIALATLDGRQQPVDSTQQLAWLAEAVVQTVLQLARRELVAAHGQVPGGAFAIIGYGSLGGLELGFGSDLDLVFLYDHPREVEASDGKRPLEAGRWFARLAQKVMTLLGAETGAGRLYDIDVRLRPDGGKGALVSSLASYRDYQRDRAWTWEHQALVRARAVAGDAALCEAFVQVRRETLTRVRDPALLHEDVRKMRARMRSELDRSDAGRLDLKQGAGGLVDLEFLLQAGVLGQAAQHPALLLACATPALIDALVQVQWLPAESAAPLHHAHATLVEAGLSCTLDRRPRLVVSTPPIRDACQIVAAIADAQQLRFQPGKGA.

The adenylyl removase stretch occupies residues 1–436 (MSQPIPSASP…AAEFAELLAP (436 aa)). Residues 443–937 (PDTLADYWRA…QLRFQPGKGA (495 aa)) are adenylyl transferase.

Belongs to the GlnE family. It depends on Mg(2+) as a cofactor.

It carries out the reaction [glutamine synthetase]-O(4)-(5'-adenylyl)-L-tyrosine + phosphate = [glutamine synthetase]-L-tyrosine + ADP. The catalysed reaction is [glutamine synthetase]-L-tyrosine + ATP = [glutamine synthetase]-O(4)-(5'-adenylyl)-L-tyrosine + diphosphate. Involved in the regulation of glutamine synthetase GlnA, a key enzyme in the process to assimilate ammonia. When cellular nitrogen levels are high, the C-terminal adenylyl transferase (AT) inactivates GlnA by covalent transfer of an adenylyl group from ATP to specific tyrosine residue of GlnA, thus reducing its activity. Conversely, when nitrogen levels are low, the N-terminal adenylyl removase (AR) activates GlnA by removing the adenylyl group by phosphorolysis, increasing its activity. The regulatory region of GlnE binds the signal transduction protein PII (GlnB) which indicates the nitrogen status of the cell. This chain is Bifunctional glutamine synthetase adenylyltransferase/adenylyl-removing enzyme, found in Xanthomonas campestris pv. campestris (strain ATCC 33913 / DSM 3586 / NCPPB 528 / LMG 568 / P 25).